Consider the following 392-residue polypeptide: Chaperone protein DnaJ (392 aa).

A J domain is found at 5 to 75; the sequence is DYYEVLGIDK…QKKQQYDQFG (71 aa). The CR-type zinc finger occupies 148–229; it reads GVEKTIKYKR…CHGTGTAKET (82 aa). Positions 161, 164, 177, 180, 203, 206, 217, and 220 each coordinate Zn(2+). CXXCXGXG motif repeat units follow at residues 161-168, 177-184, 203-210, and 217-224; these read CENCHGTG, CPTCNGQG, CPDCHGTG, and CKHCHGTG.

Belongs to the DnaJ family. Homodimer. Requires Zn(2+) as cofactor.

It localises to the cytoplasm. In terms of biological role, participates actively in the response to hyperosmotic and heat shock by preventing the aggregation of stress-denatured proteins and by disaggregating proteins, also in an autonomous, DnaK-independent fashion. Unfolded proteins bind initially to DnaJ; upon interaction with the DnaJ-bound protein, DnaK hydrolyzes its bound ATP, resulting in the formation of a stable complex. GrpE releases ADP from DnaK; ATP binding to DnaK triggers the release of the substrate protein, thus completing the reaction cycle. Several rounds of ATP-dependent interactions between DnaJ, DnaK and GrpE are required for fully efficient folding. Also involved, together with DnaK and GrpE, in the DNA replication of plasmids through activation of initiation proteins. The polypeptide is Chaperone protein DnaJ (Fusobacterium nucleatum subsp. nucleatum (strain ATCC 25586 / DSM 15643 / BCRC 10681 / CIP 101130 / JCM 8532 / KCTC 2640 / LMG 13131 / VPI 4355)).